The following is a 128-amino-acid chain: MSAKTDEILESLKSLSLLEASELVKQIEDAFGVSAAASAGVVMAAPGAAGGGDAAEEKTEFDVVLESFDAAAKIKVLKAVREATGLGLGDAKAMVEAAPKAIKEGVSKDDAEALKKAIEEVGGKVTIK.

The protein belongs to the bacterial ribosomal protein bL12 family. In terms of assembly, homodimer. Part of the ribosomal stalk of the 50S ribosomal subunit. Forms a multimeric L10(L12)X complex, where L10 forms an elongated spine to which 2 to 4 L12 dimers bind in a sequential fashion. Binds GTP-bound translation factors.

In terms of biological role, forms part of the ribosomal stalk which helps the ribosome interact with GTP-bound translation factors. Is thus essential for accurate translation. The protein is Large ribosomal subunit protein bL12 of Synechococcus sp. (strain CC9311).